Consider the following 403-residue polypeptide: Keratin, type I cytoskeletal 19 (403 aa).

Residues 1–82 are head; it reads MTSYSYRQTS…AVSDGLLSGN (82 aa). R7 bears the Omega-N-methylarginine mark. A phosphoserine mark is found at S14 and S22. Position 24 is an asymmetric dimethylarginine; alternate (R24). R24 carries the omega-N-methylarginine; alternate modification. S27 bears the Phosphoserine mark. R32 carries the post-translational modification Omega-N-methylarginine. Phosphoserine is present on residues S35 and S40. Omega-N-methylarginine is present on residues R43 and R51. S57 carries the post-translational modification Phosphoserine. Residue R64 is modified to Omega-N-methylarginine. Residues S67 and S75 each carry the phosphoserine modification. Positions 83–118 are coil 1A; sequence EKITMQNLNDRLASYLDKVRALEQANGELEVKIRDW. The IF rod domain occupies 83–394; sequence EKITMQNLND…SLLEGQEAHY (312 aa). The segment at 119-136 is linker 1; it reads YQKQGPGPSRDYNHYFKT. The coil 1B stretch occupies residues 137–228; sequence IEDLRDKILG…KNHEEEITAL (92 aa). The linker 12 stretch occupies residues 229–251; that stretch reads RSQVGGQVSVEVDSTPGVDLAKI. Residues 247-393 are necessary for interaction with PNN; sequence DLAKILSEMR…RSLLEGQEAH (147 aa). Positions 252-390 are coil 2; sequence LSEMRSQYEI…ATYRSLLEGQ (139 aa). T326 carries the post-translational modification Phosphothreonine. The rod-like helical tail stretch occupies residues 391 to 403; sequence EAHYNNLPTPKAI. Y394 carries the post-translational modification Phosphotyrosine.

Belongs to the intermediate filament family. Heterotetramer of two type I and two type II keratins. Interacts with PNN and the actin-binding domain of DMD.

Functionally, involved in the organization of myofibers. Together with KRT8, helps to link the contractile apparatus to dystrophin at the costameres of striated muscle. In Mus musculus (Mouse), this protein is Keratin, type I cytoskeletal 19 (Krt19).